A 1196-amino-acid polypeptide reads, in one-letter code: Jouberin (1196 aa).

The stretch at 13-45 (KVRFEELLKTHSDLMREKKKLKKKLVRSEENIS) forms a coiled coil. At Ser-45 the chain carries Phosphoserine. 3 disordered regions span residues 56–186 (MKET…EEDE), 215–242 (QLTY…KEVP), and 254–327 (ISGD…HEIT). Residues 80–91 (DDVSAANTNNLK) show a composition bias toward polar residues. The segment covering 92–101 (KSTRVTKNKL) has biased composition (basic residues). The segment covering 102 to 113 (RNTQLATENPNG) has biased composition (polar residues). Composition is skewed to basic and acidic residues over residues 141–154 (LKPE…DSTH), 166–179 (DHQK…GREE), and 224–233 (LFHDDKLSSE). Residues 141–434 (LKPETPENKV…VFNENFPYLL (294 aa)) form an interaction with HAP1 region. Over residues 300-309 (KPKKTKKKTK) the composition is skewed to basic residues. WD repeat units follow at residues 607–649 (AGER…FMRE), 652–691 (GHLN…TNTF), 695–735 (PHPS…DSAI), 742–781 (VHKS…NDLE), 797–837 (EFKG…ARKF), 841–880 (ANYR…QVAM), and 885–926 (PFKS…AQQE). Ser-1002 bears the Phosphoserine mark. In terms of domain architecture, SH3 spans 1051-1111 (DTAPTVVALY…PANHVASETL (61 aa)). The segment at 1115 to 1196 (LPPEIKERSP…QAGRKVTLIE (82 aa)) is disordered. Basic and acidic residues-rich tracts occupy residues 1117 to 1136 (PEIK…KIEK) and 1161 to 1182 (THSE…DTRM). A Phosphoserine modification is found at Ser-1123.

Self-associates. Part of the tectonic-like complex (also named B9 complex). Interacts with MKS1. Interacts with NPHP1; probably as heterodimers and/or AHI1(2):NPHP1(2) heterotetramers. Interacts (via SH3 domain) with the dynamin GTPase DNM2. Interacts with HAP1; probably as AHI1(2):HAP1(2) heterotetramers. Interacts with RAB8A. Interacts with CEND1. Interacts with CTNNB1/beta-catenin. Interacts with SPATA7. Highly expressed in the most primitive normal hematopoietic cells. Expressed in brain, particularly in neurons that give rise to the crossing axons of the corticospinal tract and superior cerebellar peduncles. Expressed in kidney (renal collecting duct cells) (at protein level).

It localises to the cytoplasm. Its subcellular location is the cytoskeleton. The protein resides in the cilium basal body. It is found in the cell junction. The protein localises to the adherens junction. It localises to the microtubule organizing center. Its subcellular location is the centrosome. The protein resides in the centriole. Its function is as follows. Involved in vesicle trafficking and required for ciliogenesis, formation of primary non-motile cilium, and recruitment of RAB8A to the basal body of primary cilium. Component of the tectonic-like complex, a complex localized at the transition zone of primary cilia and acting as a barrier that prevents diffusion of transmembrane proteins between the cilia and plasma membranes. Involved in neuronal differentiation. As a positive modulator of classical Wnt signaling, may play a crucial role in ciliary signaling during cerebellum embryonic development. This Homo sapiens (Human) protein is Jouberin (AHI1).